We begin with the raw amino-acid sequence, 90 residues long: Cell division topological specificity factor (90 aa).

It belongs to the MinE family.

Functionally, prevents the cell division inhibition by proteins MinC and MinD at internal division sites while permitting inhibition at polar sites. This ensures cell division at the proper site by restricting the formation of a division septum at the midpoint of the long axis of the cell. The protein is Cell division topological specificity factor of Pelotomaculum thermopropionicum (strain DSM 13744 / JCM 10971 / SI).